The primary structure comprises 401 residues: Imidazolonepropionase (401 aa).

The Fe(3+) site is built by His66 and His68. Zn(2+) contacts are provided by His66 and His68. Residues Arg75, Tyr138, and His171 each coordinate 4-imidazolone-5-propanoate. Tyr138 is a binding site for N-formimidoyl-L-glutamate. His236 serves as a coordination point for Fe(3+). A Zn(2+)-binding site is contributed by His236. Residue Gln239 coordinates 4-imidazolone-5-propanoate. Residue Asp311 coordinates Fe(3+). Asp311 contributes to the Zn(2+) binding site. Residues Asn313 and Gly315 each coordinate N-formimidoyl-L-glutamate. Thr316 contributes to the 4-imidazolone-5-propanoate binding site.

Belongs to the metallo-dependent hydrolases superfamily. HutI family. Zn(2+) is required as a cofactor. The cofactor is Fe(3+).

Its subcellular location is the cytoplasm. It catalyses the reaction 4-imidazolone-5-propanoate + H2O = N-formimidoyl-L-glutamate. It functions in the pathway amino-acid degradation; L-histidine degradation into L-glutamate; N-formimidoyl-L-glutamate from L-histidine: step 3/3. In terms of biological role, catalyzes the hydrolytic cleavage of the carbon-nitrogen bond in imidazolone-5-propanoate to yield N-formimidoyl-L-glutamate. It is the third step in the universal histidine degradation pathway. The chain is Imidazolonepropionase from Pseudomonas putida (strain ATCC 700007 / DSM 6899 / JCM 31910 / BCRC 17059 / LMG 24140 / F1).